Reading from the N-terminus, the 38-residue chain is Photosystem I reaction center subunit IX (38 aa).

A helical membrane pass occupies residues 4-24 (FLTAAPVVAAIWFTATAGILI).

Belongs to the PsaJ family.

It localises to the cellular thylakoid membrane. May help in the organization of the PsaE and PsaF subunits. This Synechococcus sp. (strain CC9605) protein is Photosystem I reaction center subunit IX.